The chain runs to 174 residues: uncharacterized protein (174 aa).

It belongs to the gamma-class carbonic anhydrase family.

This is an uncharacterized protein from Pseudomonas aeruginosa (strain ATCC 15692 / DSM 22644 / CIP 104116 / JCM 14847 / LMG 12228 / 1C / PRS 101 / PAO1).